The chain runs to 246 residues: tRNA pseudouridine synthase A (246 aa).

Aspartate 52 serves as the catalytic Nucleophile. Tyrosine 111 lines the substrate pocket.

The protein belongs to the tRNA pseudouridine synthase TruA family. In terms of assembly, homodimer.

The catalysed reaction is uridine(38/39/40) in tRNA = pseudouridine(38/39/40) in tRNA. In terms of biological role, formation of pseudouridine at positions 38, 39 and 40 in the anticodon stem and loop of transfer RNAs. This is tRNA pseudouridine synthase A from Ehrlichia ruminantium (strain Gardel).